The following is a 381-amino-acid chain: Glycerol-3-phosphate dehydrogenase [NAD(+)] (381 aa).

The interval 1 to 27 is disordered; it reads MTAMDRLDHVSNQLAAKRQKKNPEGKP. NAD(+) is bound by residues 34-39, F66, and F122; that span reads GSGNWG. Position 145 (K145) interacts with substrate. NAD(+) is bound at residue A178. Residue K238 is the Proton acceptor of the active site. Positions 303 and 332 each coordinate NAD(+). Residue 303 to 304 coordinates substrate; it reads RN.

The protein belongs to the NAD-dependent glycerol-3-phosphate dehydrogenase family.

It catalyses the reaction sn-glycerol 3-phosphate + NAD(+) = dihydroxyacetone phosphate + NADH + H(+). This chain is Glycerol-3-phosphate dehydrogenase [NAD(+)] (GPD), found in Pichia angusta (Yeast).